The following is a 257-amino-acid chain: NAD kinase (257 aa).

Catalysis depends on D44, which acts as the Proton acceptor. NAD(+)-binding positions include 44-45 (DG), R49, 116-117 (NE), D146, A154, and 157-162 (TAYNLS).

The protein belongs to the NAD kinase family. It depends on a divalent metal cation as a cofactor.

The protein resides in the cytoplasm. It catalyses the reaction NAD(+) + ATP = ADP + NADP(+) + H(+). In terms of biological role, involved in the regulation of the intracellular balance of NAD and NADP, and is a key enzyme in the biosynthesis of NADP. Catalyzes specifically the phosphorylation on 2'-hydroxyl of the adenosine moiety of NAD to yield NADP. The chain is NAD kinase from Rhizorhabdus wittichii (strain DSM 6014 / CCUG 31198 / JCM 15750 / NBRC 105917 / EY 4224 / RW1) (Sphingomonas wittichii).